The sequence spans 1853 residues: DNA-directed RNA polymerase II subunit RPB1 (1853 aa).

Zn(2+) contacts are provided by cysteine 66, cysteine 69, cysteine 76, histidine 79, cysteine 106, cysteine 109, cysteine 149, and cysteine 177. Positions 256 to 268 (PAVVTFGSAKNQD) are lid loop. Residues 314–331 (NCIPGLPTATQKGGRPLK) form a rudder loop region. Aspartate 489, aspartate 491, and aspartate 493 together coordinate Mg(2+). A bridging helix region spans residues 827-839 (PSEFFFHAMGGRE). A Glycyl lysine isopeptide (Lys-Gly) (interchain with G-Cter in ubiquitin) cross-link involves residue lysine 1260. 2 disordered regions span residues 1520 to 1568 (PWSP…PRTP) and 1589 to 1853 (SPHY…DPQN). 2 stretches are compositionally biased toward low complexity: residues 1589–1811 (SPHY…TPSP) and 1821–1853 (YSPS…DPQN). 26 consecutive repeat copies span residues 1592 to 1598 (YSPTSPS), 1599 to 1605 (YSPTSPA), 1616 to 1622 (YSPTSPS), 1623 to 1629 (YSPTSPS), 1630 to 1636 (YSPTSPS), 1637 to 1643 (YSPTSPS), 1644 to 1650 (YSPTSPS), 1651 to 1657 (YSPTSPS), 1658 to 1664 (YSPTSPS), 1665 to 1671 (YSPTSPS), 1679 to 1685 (YSPTSPT), 1686 to 1692 (YSPTSPT), 1693 to 1699 (YSPTSPT), 1700 to 1706 (YSPTSPT), 1707 to 1713 (YSPTSPS), 1717 to 1723 (YSPSSPK), 1724 to 1730 (YSPSSPT), 1731 to 1737 (YSPTSPS), 1752 to 1758 (YSPSSPT), 1759 to 1765 (YTPSSPT), 1779 to 1785 (YSPTSPT), 1786 to 1792 (YSPTSPS), 1800 to 1806 (YSPTSPT), 1821 to 1827 (YSPSSPT), 1828 to 1834 (YSPSSPT), and 1842 to 1848 (YSPSSPT). The segment at 1592-1848 (YSPTSPSYSP…SPSYSPSSPT (257 aa)) is C-terminal domain (CTD); 26 X 7 AA approximate tandem repeats of Y-[ST]-P-[ST]-S-P-[AGKNQRST].

This sequence belongs to the RNA polymerase beta' chain family. As to quaternary structure, component of the RNA polymerase II (Pol II) complex consisting of 12 subunits. Interacts with sig-7. The tandem 7 residues repeats in the C-terminal domain (CTD) can be highly phosphorylated. The phosphorylation activates Pol II. Phosphorylation occurs mainly at residues 'Ser-2' and 'Ser-5' of the heptapeptide repeat and starts at the 3- to 4-cell embryonic stage. This phosphorylation also occurs in the early stages of oocyte development and is not detected in oocytes arrested at the meiotic diakinesis stage. In the somatic lineage, phosphorylation at 'Ser-2' is mediated by cdk-12 downstream of cdk-9 whereas in the germline lineage cdk-12 phosphorylates 'Ser-2' independently of cdk-9. Phosphorylation is likely mediated by cdk-7. May be dephosphorylated by fcp-1 in diakinetic oocytes and in 1-cell and 2-cell embryos. Dephosphorylated at 'Ser-5' of the heptapeptide repeat by ssup-72. The phosphorylation state is believed to result from the balanced action of site-specific CTD kinases and phosphatase, and a 'CTD code' that specifies the position of Pol II within the transcription cycle has been proposed. In terms of processing, following transcription stress, the elongating form of RNA polymerase II (RNA pol IIo) is polyubiquitinated via 'Lys-63'-linkages on Lys-1260 at DNA damage sites without leading to degradation: ubiquitination promotes RNA pol IIo backtracking to allow access by the transcription-coupled nucleotide excision repair (TC-NER) machinery. Subsequent DEF1-dependent polyubiquitination by the elongin complex via 'Lys-48'-linkages may lead to proteasome-mediated degradation; presumably at stalled RNA pol II where TC-NER has failed, to halt global transcription and enable 'last resort' DNA repair pathways.

It is found in the nucleus. It localises to the chromosome. It carries out the reaction RNA(n) + a ribonucleoside 5'-triphosphate = RNA(n+1) + diphosphate. Functionally, DNA-dependent RNA polymerase catalyzes the transcription of DNA into RNA using the four ribonucleoside triphosphates as substrates. Largest and catalytic component of RNA polymerase II which synthesizes mRNA precursors and many functional non-coding RNAs. Forms the polymerase active center together with the second largest subunit. Pol II is the central component of the basal RNA polymerase II transcription machinery. It is composed of mobile elements that move relative to each other. RPB1 is part of the core element with the central large cleft, the clamp element that moves to open and close the cleft and the jaws that are thought to grab the incoming DNA template. At the start of transcription, a single-stranded DNA template strand of the promoter is positioned within the central active site cleft of Pol II. A bridging helix emanates from RPB1 and crosses the cleft near the catalytic site and is thought to promote translocation of Pol II by acting as a ratchet that moves the RNA-DNA hybrid through the active site by switching from straight to bent conformations at each step of nucleotide addition. During transcription elongation, Pol II moves on the template as the transcript elongates. Elongation is influenced by the phosphorylation status of the C-terminal domain (CTD) of Pol II largest subunit (RPB1), which serves as a platform for assembly of factors that regulate transcription initiation, elongation, termination and mRNA processing. Involved in the transcription of several genes including those involved in embryogenesis. In Caenorhabditis briggsae, this protein is DNA-directed RNA polymerase II subunit RPB1.